The sequence spans 86 residues: Short neurotoxin homolog NTL1 (86 aa).

The first 21 residues, 1 to 21, serve as a signal peptide directing secretion; the sequence is MKTLLLSLVVLTIACLDLGYT. 4 cysteine pairs are disulfide-bonded: Cys-24-Cys-45, Cys-38-Cys-62, Cys-66-Cys-78, and Cys-79-Cys-84.

Expressed by the venom gland.

It is found in the secreted. This chain is Short neurotoxin homolog NTL1, found in Bungarus multicinctus (Many-banded krait).